Consider the following 206-residue polypeptide: Large ribosomal subunit protein uL4 (206 aa).

Belongs to the universal ribosomal protein uL4 family. In terms of assembly, part of the 50S ribosomal subunit.

Its function is as follows. One of the primary rRNA binding proteins, this protein initially binds near the 5'-end of the 23S rRNA. It is important during the early stages of 50S assembly. It makes multiple contacts with different domains of the 23S rRNA in the assembled 50S subunit and ribosome. In terms of biological role, forms part of the polypeptide exit tunnel. This chain is Large ribosomal subunit protein uL4, found in Xanthobacter autotrophicus (strain ATCC BAA-1158 / Py2).